The following is an 86-amino-acid chain: Small ribosomal subunit protein uS17 (86 aa).

It belongs to the universal ribosomal protein uS17 family. Part of the 30S ribosomal subunit.

Functionally, one of the primary rRNA binding proteins, it binds specifically to the 5'-end of 16S ribosomal RNA. The protein is Small ribosomal subunit protein uS17 of Tropheryma whipplei (strain TW08/27) (Whipple's bacillus).